A 387-amino-acid chain; its full sequence is Phosphoglycerate kinase (387 aa).

Substrate is bound by residues 21–23 (DLN), arginine 36, 59–62 (HLGR), arginine 113, and arginine 146. Residues lysine 197, glutamate 314, and 340–343 (GGDT) contribute to the ATP site.

The protein belongs to the phosphoglycerate kinase family. As to quaternary structure, monomer.

It localises to the cytoplasm. It catalyses the reaction (2R)-3-phosphoglycerate + ATP = (2R)-3-phospho-glyceroyl phosphate + ADP. It participates in carbohydrate degradation; glycolysis; pyruvate from D-glyceraldehyde 3-phosphate: step 2/5. The chain is Phosphoglycerate kinase from Pectobacterium atrosepticum (strain SCRI 1043 / ATCC BAA-672) (Erwinia carotovora subsp. atroseptica).